A 357-amino-acid polypeptide reads, in one-letter code: Probable cinnamyl alcohol dehydrogenase (357 aa).

Cysteine 47 is a binding site for Zn(2+). Residue serine 49 participates in NADP(+) binding. Zn(2+) contacts are provided by histidine 69, glutamate 70, cysteine 100, cysteine 103, cysteine 106, cysteine 114, and cysteine 163. NADP(+) is bound by residues threonine 167, 188–193 (GLGGVG), 211–216 (SSSDKK), threonine 251, glycine 275, and 298–300 (SFI).

The protein belongs to the zinc-containing alcohol dehydrogenase family. Homodimer. Zn(2+) is required as a cofactor.

The catalysed reaction is (E)-cinnamyl alcohol + NADP(+) = (E)-cinnamaldehyde + NADPH + H(+). It carries out the reaction (E)-coniferol + NADP(+) = (E)-coniferaldehyde + NADPH + H(+). The enzyme catalyses (E)-sinapyl alcohol + NADP(+) = (E)-sinapaldehyde + NADPH + H(+). It catalyses the reaction (E)-4-coumaroyl alcohol + NADP(+) = (E)-4-coumaraldehyde + NADPH + H(+). The catalysed reaction is (E)-caffeyl alcohol + NADP(+) = (E)-caffeyl aldehyde + NADPH + H(+). Its pathway is aromatic compound metabolism; phenylpropanoid biosynthesis. Its function is as follows. Involved in lignin biosynthesis. Catalyzes the final step specific for the production of lignin monomers. Catalyzes the NADPH-dependent reduction of coniferaldehyde, 5-hydroxyconiferaldehyde, sinapaldehyde, 4-coumaraldehyde and caffeyl aldehyde to their respective alcohols. The protein is Probable cinnamyl alcohol dehydrogenase of Pinus taeda (Loblolly pine).